Here is a 392-residue protein sequence, read N- to C-terminus: Protein O-glucosyltransferase 1 (392 aa).

An N-terminal signal peptide occupies residues 1–23 (MEWWASSPLRLWLLLFLLPSAQG). Residues Asn-40 and Asn-53 are each glycosylated (N-linked (GlcNAc...) asparagine). 4 disulfides stabilise this stretch: Cys-49/Cys-56, Cys-54/Cys-357, Cys-102/Cys-108, and Cys-263/Cys-286. The segment at 103–107 (MFPSR) is interaction with the consensus sequence C-X-S-X-[PA]-C in peptide substrates. Catalysis depends on Asp-133, which acts as the Proton donor/acceptor. The tract at residues 172 to 178 (AVWPIYP) is interaction with the consensus sequence C-X-S-X-[PA]-C in peptide substrates. Tyr-177 provides a ligand contact to UDP-alpha-D-glucose. N-linked (GlcNAc...) asparagine glycosylation occurs at Asn-204. Residues Ser-212, Arg-218, and 274–279 (VAASFR) each bind UDP-alpha-D-glucose. Asn-373 is a glycosylation site (N-linked (GlcNAc...) asparagine). The short motif at 389–392 (KTEL) is the Prevents secretion from ER element.

Belongs to the glycosyltransferase 90 family. Expressed in most adult tissues at different intensities. Abundantly expressed in liver. Expressed also in brain, heart, skeletal muscle, spleen, kidney, placenta, lung and peripheral blood leukocyte. Not detectable in colon, thymus and small intestine. Expressed in the epidermis, especially in the upper parts, stratum spinosum and stratum granulosum (at protein level).

It localises to the endoplasmic reticulum lumen. It carries out the reaction L-seryl-[EGF-like domain protein] + UDP-alpha-D-xylose = 3-O-(beta-D-xylosyl)-L-seryl-[EGF-like domain protein] + UDP + H(+). The catalysed reaction is L-seryl-[EGF-like domain protein] + UDP-alpha-D-glucose = 3-O-(beta-D-glucosyl)-L-seryl-[EGF-like domain protein] + UDP + H(+). It functions in the pathway protein modification; protein glycosylation. Functionally, dual specificity glycosyltransferase that catalyzes the transfer of glucose and xylose from UDP-glucose and UDP-xylose, respectively, to a serine residue found in the consensus sequence of C-X-S-X-P-C. Specifically targets extracellular EGF repeats of protein such as CRB2, F7, F9 and NOTCH2. Acts as a positive regulator of Notch signaling by mediating O-glucosylation of Notch, leading to regulate muscle development. Notch glucosylation does not affect Notch ligand binding. Required during early development to promote gastrulation: acts by mediating O-glucosylation of CRB2, which is required for CRB2 localization to the cell membrane. This Homo sapiens (Human) protein is Protein O-glucosyltransferase 1.